A 340-amino-acid polypeptide reads, in one-letter code: tRNA N6-adenosine threonylcarbamoyltransferase (340 aa).

Fe cation-binding residues include H111 and H115. Substrate is bound by residues 133 to 137, D166, G179, D183, and N273; that span reads VVSGG. D301 is a Fe cation binding site.

The protein belongs to the KAE1 / TsaD family. Fe(2+) serves as cofactor.

The protein localises to the cytoplasm. The enzyme catalyses L-threonylcarbamoyladenylate + adenosine(37) in tRNA = N(6)-L-threonylcarbamoyladenosine(37) in tRNA + AMP + H(+). Functionally, required for the formation of a threonylcarbamoyl group on adenosine at position 37 (t(6)A37) in tRNAs that read codons beginning with adenine. Is involved in the transfer of the threonylcarbamoyl moiety of threonylcarbamoyl-AMP (TC-AMP) to the N6 group of A37, together with TsaE and TsaB. TsaD likely plays a direct catalytic role in this reaction. This is tRNA N6-adenosine threonylcarbamoyltransferase from Pelobacter propionicus (strain DSM 2379 / NBRC 103807 / OttBd1).